Consider the following 126-residue polypeptide: RutC family protein y4sK (126 aa).

The protein belongs to the RutC family.

The protein is RutC family protein y4sK of Sinorhizobium fredii (strain NBRC 101917 / NGR234).